Reading from the N-terminus, the 334-residue chain is FAD:protein FMN transferase (334 aa).

An N-terminal signal peptide occupies residues 1–16 (MRNWLVALASLLLLAG). Cysteine 17 carries N-palmitoyl cysteine lipidation. The S-diacylglycerol cysteine moiety is linked to residue cysteine 17. Residues methionine 31, tyrosine 69, 110–112 (ALD), and aspartate 168 each bind FAD. Residue threonine 171 coordinates Mg(2+). Positions 174 and 259 each coordinate FAD. Mg(2+)-binding residues include aspartate 285 and threonine 289.

It belongs to the ApbE family. Requires Mg(2+) as cofactor.

Its subcellular location is the cell inner membrane. The enzyme catalyses L-threonyl-[protein] + FAD = FMN-L-threonyl-[protein] + AMP + H(+). Flavin transferase that catalyzes the transfer of the FMN moiety of FAD and its covalent binding to the hydroxyl group of a threonine residue in a target flavoprotein such as NqrB and NqrC, two subunits of the NQR complex. Cannot use directly FMN instead of FAD as substrate. The sequence is that of FAD:protein FMN transferase from Vibrio cholerae serotype O1 (strain ATCC 39541 / Classical Ogawa 395 / O395).